We begin with the raw amino-acid sequence, 214 residues long: Large ribosomal subunit protein uL2my, C-terminal part (214 aa).

The transit peptide at 1-30 directs the protein to the mitochondrion; that stretch reads MSGLVALCRARASASSSLFNSVIRPAFRNF. The interval 157–214 is disordered; that stretch reads VAMNPCDHPHGGGEGKSKSSGSRGRTSVSPWGKPCKGGYKSASVKKKKKRLAEAAAKM. The segment covering 163 to 173 has biased composition (basic and acidic residues); the sequence is DHPHGGGEGKS. The segment covering 174 to 185 has biased composition (low complexity); it reads KSSGSRGRTSVS.

It belongs to the universal ribosomal protein uL2 family. As to quaternary structure, component of the mitochondrial ribosome large subunit.

The protein localises to the mitochondrion. The sequence is that of Large ribosomal subunit protein uL2my, C-terminal part from Arabidopsis thaliana (Mouse-ear cress).